We begin with the raw amino-acid sequence, 267 residues long: tRNA pseudouridine synthase A (267 aa).

D55 functions as the Nucleophile in the catalytic mechanism. Residue Y111 participates in substrate binding.

The protein belongs to the tRNA pseudouridine synthase TruA family.

It catalyses the reaction uridine(38/39/40) in tRNA = pseudouridine(38/39/40) in tRNA. In terms of biological role, formation of pseudouridine at positions 38, 39 and 40 in the anticodon stem and loop of transfer RNAs. This Thermococcus onnurineus (strain NA1) protein is tRNA pseudouridine synthase A.